We begin with the raw amino-acid sequence, 2048 residues long: Myoferlin (2048 aa).

Positions 1–101 constitute a C2 1 domain; the sequence is MLRVIVESAT…IGDQNRSLPY (101 aa). The Cytoplasmic segment spans residues 1–2012; it reads MLRVIVESAT…MRFIVWRRFK (2012 aa). The disordered stretch occupies residues 124-176; the sequence is YTPPSAPHPNDPSGTSVPGMGEEEEEDQGDEDRVDGIVRGPGPKGPSGTVSEA. The span at 144–156 shows a compositional bias: acidic residues; that stretch reads GEEEEEDQGDEDR. 2 positions are modified to phosphoserine: Ser-170 and Ser-174. 2 C2 domains span residues 183 to 300 and 339 to 475; these read TKGK…RKWL and DSDD…EATT. The interval 186 to 281 is necessary for interaction with EHD2; the sequence is KSSRRMLSNK…RADCLMGEFK (96 aa). Asp-390, Asp-396, Asp-444, Asp-446, and Asp-452 together coordinate Ca(2+). N6-acetyllysine occurs at positions 540 and 871. C2 domains lie at 1110 to 1238 and 1269 to 1397; these read GANT…LLWH and LPSQ…GKED. Positions 1142, 1148, 1204, and 1206 each coordinate Ca(2+). Lys-1494 carries the post-translational modification N6-acetyllysine. 2 consecutive C2 domains span residues 1523 to 1641 and 1759 to 1907; these read PAPP…SHCG and GPPG…EKCS. Residues Asp-1556, Asp-1562, Asp-1611, Asp-1613, Asp-1878, Ser-1881, and Asp-1884 each contribute to the Ca(2+) site. Positions 1964–1975 are enriched in basic and acidic residues; that stretch reads EADERPAGKGRS. Positions 1964-1986 are disordered; that stretch reads EADERPAGKGRSEPNMNPKLDPP. Residues 2013-2033 form a helical membrane-spanning segment; sequence WVIIGLLLLLILLLFVAVLLY. The Extracellular segment spans residues 2034 to 2048; the sequence is SLPNYLSMKIVRPNA.

It belongs to the ferlin family. As to quaternary structure, interacts with EHD1. Interacts with EHD2; the interaction is direct. Interacts with DNM2 and KDR. Interacts with RIPOR2. Requires Ca(2+) as cofactor. Expressed in myoblasts (at protein level). Expressed in endothelial cells.

The protein localises to the cell membrane. Its subcellular location is the nucleus membrane. It is found in the cytoplasmic vesicle membrane. Calcium/phospholipid-binding protein that plays a role in the plasmalemma repair mechanism of endothelial cells that permits rapid resealing of membranes disrupted by mechanical stress. Involved in endocytic recycling. Implicated in VEGF signal transduction by regulating the levels of the receptor KDR. This is Myoferlin (Myof) from Mus musculus (Mouse).